The chain runs to 211 residues: MELEDIRRDYSLGGLRRADLPQEPVELFELWLKQAVEAKLTDPTAMTVATVDENGQPFQRIVLLKHFDKTGFVFYTNLGSRKAQQLEQHSKISLHFPWHPLERQVHITGTAEKLTALENMKYFTSRPKESQIAAWASKQSSRLTARAALEGKYLELKQKFAKGEIPVPKFWGGFRIKIDSIEFWQGGDHRLHDRFLYSKDQNDWQIDRLAP.

Substrate-binding positions include 7–10 (RRDY) and Lys65. Residues 60 to 65 (RIVLLK), 75 to 76 (YT), Arg81, Lys82, and Gln104 each bind FMN. Tyr122, Arg126, and Ser130 together coordinate substrate. FMN contacts are provided by residues 139–140 (QS) and Trp184. 190-192 (RLH) provides a ligand contact to substrate. An FMN-binding site is contributed by Arg194.

The protein belongs to the pyridoxamine 5'-phosphate oxidase family. In terms of assembly, homodimer. Requires FMN as cofactor.

It catalyses the reaction pyridoxamine 5'-phosphate + O2 + H2O = pyridoxal 5'-phosphate + H2O2 + NH4(+). The catalysed reaction is pyridoxine 5'-phosphate + O2 = pyridoxal 5'-phosphate + H2O2. The protein operates within cofactor metabolism; pyridoxal 5'-phosphate salvage; pyridoxal 5'-phosphate from pyridoxamine 5'-phosphate: step 1/1. It functions in the pathway cofactor metabolism; pyridoxal 5'-phosphate salvage; pyridoxal 5'-phosphate from pyridoxine 5'-phosphate: step 1/1. In terms of biological role, catalyzes the oxidation of either pyridoxine 5'-phosphate (PNP) or pyridoxamine 5'-phosphate (PMP) into pyridoxal 5'-phosphate (PLP). This is Pyridoxine/pyridoxamine 5'-phosphate oxidase from Aliivibrio fischeri (strain ATCC 700601 / ES114) (Vibrio fischeri).